A 421-amino-acid chain; its full sequence is MRLMLNEPVKEIMTKDVVTVTPDTPVSKALGIMEENGFHHLIVVDKKDGKEEYYLISMRDLLLASSTDEEVRSLMYKAHCVHEDTPFLDAVCEMLDSGQRAAPIVNNVGKMVGIITDYDIMARAAKSKIMKDTKVTKIMTRNVITINENDSIGKARALMRDNNIGRLVVVDDEGNPVGMVTEVDILKKVFKPKKKMTAGEFKGEKVPRMGQPVRLIMNTPLITVDVDASAADAARVMQEYDIRGVPVVKGKSLRGIVTRLDIIKYIADLKKGAMIEIELHGMLDPEFKDLAERIIATEVKKMVKHAGKIHWIKITIKKERDKGGVPYYRITTYVKTPNKLYVGEGRPKASLPNKLEAEGEDIAYVSEHERWEFIDVLKESLESVLRQLEADYDKYHPKHAGKVVKGQFPEEFNPEEFKKEE.

4 CBS domains span residues 13 to 74 (MTKD…VRSL), 74 to 133 (LMYK…MKDT), 139 to 195 (MTRN…PKKK), and 217 to 274 (MNTP…KGAM).

This is an uncharacterized protein from Methanocaldococcus jannaschii (strain ATCC 43067 / DSM 2661 / JAL-1 / JCM 10045 / NBRC 100440) (Methanococcus jannaschii).